Reading from the N-terminus, the 239-residue chain is Pyridoxine 5'-phosphate synthase (239 aa).

Asn-9 contributes to the 3-amino-2-oxopropyl phosphate binding site. 11 to 12 lines the 1-deoxy-D-xylulose 5-phosphate pocket; sequence DH. Residue Arg-20 coordinates 3-amino-2-oxopropyl phosphate. The active-site Proton acceptor is His-45. Residues Arg-47 and His-52 each contribute to the 1-deoxy-D-xylulose 5-phosphate site. Glu-72 (proton acceptor) is an active-site residue. Position 102 (Thr-102) interacts with 1-deoxy-D-xylulose 5-phosphate. His-189 serves as the catalytic Proton donor. 3-amino-2-oxopropyl phosphate is bound by residues Gly-190 and 211-212; that span reads GH.

This sequence belongs to the PNP synthase family. As to quaternary structure, homooctamer; tetramer of dimers.

It is found in the cytoplasm. The enzyme catalyses 3-amino-2-oxopropyl phosphate + 1-deoxy-D-xylulose 5-phosphate = pyridoxine 5'-phosphate + phosphate + 2 H2O + H(+). It functions in the pathway cofactor biosynthesis; pyridoxine 5'-phosphate biosynthesis; pyridoxine 5'-phosphate from D-erythrose 4-phosphate: step 5/5. Catalyzes the complicated ring closure reaction between the two acyclic compounds 1-deoxy-D-xylulose-5-phosphate (DXP) and 3-amino-2-oxopropyl phosphate (1-amino-acetone-3-phosphate or AAP) to form pyridoxine 5'-phosphate (PNP) and inorganic phosphate. The chain is Pyridoxine 5'-phosphate synthase from Ehrlichia chaffeensis (strain ATCC CRL-10679 / Arkansas).